A 64-amino-acid chain; its full sequence is Large ribosomal subunit protein bL32 (64 aa).

It belongs to the bacterial ribosomal protein bL32 family.

This chain is Large ribosomal subunit protein bL32, found in Flavobacterium psychrophilum (strain ATCC 49511 / DSM 21280 / CIP 103535 / JIP02/86).